A 473-amino-acid polypeptide reads, in one-letter code: ATP synthase subunit beta (473 aa).

158 to 165 (GGAGVGKT) contacts ATP.

This sequence belongs to the ATPase alpha/beta chains family. In terms of assembly, F-type ATPases have 2 components, CF(1) - the catalytic core - and CF(0) - the membrane proton channel. CF(1) has five subunits: alpha(3), beta(3), gamma(1), delta(1), epsilon(1). CF(0) has three main subunits: a(1), b(2) and c(9-12). The alpha and beta chains form an alternating ring which encloses part of the gamma chain. CF(1) is attached to CF(0) by a central stalk formed by the gamma and epsilon chains, while a peripheral stalk is formed by the delta and b chains.

It is found in the cell membrane. The enzyme catalyses ATP + H2O + 4 H(+)(in) = ADP + phosphate + 5 H(+)(out). Produces ATP from ADP in the presence of a proton gradient across the membrane. The catalytic sites are hosted primarily by the beta subunits. This chain is ATP synthase subunit beta, found in Geobacillus thermoleovorans (Bacillus thermoleovorans).